The chain runs to 420 residues: MAP kinase-interacting serine/threonine-protein kinase 1 (420 aa).

The disordered stretch occupies residues 1–25; the sequence is MGSSEPIPIAESDKRKKKKRKARAT. Residue Ser-27 is modified to Phosphoserine; by PAK2. A Protein kinase domain is found at 37 to 321; that stretch reads KLTSELLGEG…AAQVLQHPWV (285 aa). Residues 43–51 and Lys-66 contribute to the ATP site; that span reads LGEGANAKV. Asp-158 (proton acceptor) is an active-site residue. Phosphoserine is present on residues Ser-168 and Ser-173. A phosphothreonine mark is found at Thr-197, Thr-202, and Thr-332. Positions 386 to 420 are disordered; sequence LSPPSKSRLARRRALAQAGRSGDAPPSPTPTTPAP. A compositionally biased stretch (low complexity) spans 400–409; that stretch reads LAQAGRSGDA. Residues 410–420 show a composition bias toward pro residues; the sequence is PPSPTPTTPAP.

This sequence belongs to the protein kinase superfamily. CAMK Ser/Thr protein kinase family. As to quaternary structure, interacts with the C-terminal regions of EIF4G1 and EIF4G2. Also binds to dephosphorylated ERK1 and ERK2, and to the p38 kinases. The cofactor is Mg(2+). Post-translationally, dual phosphorylation of Thr-197 and Thr-202 activates the kinase. Phosphorylation of Thr-332 activates the kinase. MAPK3/ERK1 is one of the kinases which activate MKNK1/MNK1. Phosphorylation by PAK2 leads to a reduced phosphorylation of EIF4G1.

The catalysed reaction is L-seryl-[protein] + ATP = O-phospho-L-seryl-[protein] + ADP + H(+). The enzyme catalyses L-threonyl-[protein] + ATP = O-phospho-L-threonyl-[protein] + ADP + H(+). Its activity is regulated as follows. Phosphorylated and activated by the p38 kinases and kinases in the Erk pathway. Its function is as follows. May play a role in the response to environmental stress and cytokines. Appears to regulate translation by phosphorylating EIF4E, thus increasing the affinity of this protein for the 7-methylguanosine-containing mRNA cap. The chain is MAP kinase-interacting serine/threonine-protein kinase 1 (MKNK1) from Bos taurus (Bovine).